A 1077-amino-acid chain; its full sequence is Carbamoyl phosphate synthase large chain (1077 aa).

The carboxyphosphate synthetic domain stretch occupies residues Met-1–Glu-403. ATP is bound by residues Arg-129, Arg-169, Gly-175, Gly-176, Glu-208, Leu-210, Glu-215, Gly-241, Ile-242, His-243, Gln-285, and Glu-299. Positions Asp-133–Val-328 constitute an ATP-grasp 1 domain. 3 residues coordinate Mg(2+): Gln-285, Glu-299, and Asn-301. Residues Gln-285, Glu-299, and Asn-301 each coordinate Mn(2+). Residues Val-404–Ala-553 are oligomerization domain. Positions Asn-554–Gly-935 are carbamoyl phosphate synthetic domain. The ATP-grasp 2 domain occupies Gln-678–Ala-869. Residues Arg-714, Arg-753, Leu-755, Glu-760, Gly-785, Val-786, His-787, Ser-788, Gln-828, and Glu-840 each contribute to the ATP site. The Mg(2+) site is built by Gln-828, Glu-840, and Asn-842. Mn(2+) is bound by residues Gln-828, Glu-840, and Asn-842. Residues Asn-936–Ala-1077 form the MGS-like domain. The interval Asn-936–Ala-1077 is allosteric domain.

It belongs to the CarB family. In terms of assembly, composed of two chains; the small (or glutamine) chain promotes the hydrolysis of glutamine to ammonia, which is used by the large (or ammonia) chain to synthesize carbamoyl phosphate. Tetramer of heterodimers (alpha,beta)4. It depends on Mg(2+) as a cofactor. Requires Mn(2+) as cofactor.

The catalysed reaction is hydrogencarbonate + L-glutamine + 2 ATP + H2O = carbamoyl phosphate + L-glutamate + 2 ADP + phosphate + 2 H(+). The enzyme catalyses hydrogencarbonate + NH4(+) + 2 ATP = carbamoyl phosphate + 2 ADP + phosphate + 2 H(+). The protein operates within amino-acid biosynthesis; L-arginine biosynthesis; carbamoyl phosphate from bicarbonate: step 1/1. It functions in the pathway pyrimidine metabolism; UMP biosynthesis via de novo pathway; (S)-dihydroorotate from bicarbonate: step 1/3. Large subunit of the glutamine-dependent carbamoyl phosphate synthetase (CPSase). CPSase catalyzes the formation of carbamoyl phosphate from the ammonia moiety of glutamine, carbonate, and phosphate donated by ATP, constituting the first step of 2 biosynthetic pathways, one leading to arginine and/or urea and the other to pyrimidine nucleotides. The large subunit (synthetase) binds the substrates ammonia (free or transferred from glutamine from the small subunit), hydrogencarbonate and ATP and carries out an ATP-coupled ligase reaction, activating hydrogencarbonate by forming carboxy phosphate which reacts with ammonia to form carbamoyl phosphate. This chain is Carbamoyl phosphate synthase large chain, found in Vibrio vulnificus (strain CMCP6).